The following is a 286-amino-acid chain: MPGVQDRVIVVTGAGGGLGREYALTLAGEGASVVVNDLGGARDGTGAGSAMADEVVAEIRDKGGRAVANYDSVATEDGAANIIKTALDEFGAVHGVVSNAGILRDGTFHKMSFENWDAVLKVHLYGGYHVLRAAWPHFREQSYGRVVVATSTSGLFGNFGQTNYGAAKLGLVGLINTLALEGAKYNIHANALAPIAATRMTQDILPPEVLEKLTPEFVAPVVAYLCTEECADNASVYVVGGGKVQRVALFGNDGANFDKPPSVQDVAARWAEITDLSGAKIAGFKL.

11–35 contacts NAD(+); the sequence is VTGAGGGLGREYALTLAGEGASVVV. Residue Ser151 participates in substrate binding. Tyr164 serves as the catalytic Proton acceptor. An Isoglutamyl lysine isopeptide (Lys-Gln) (interchain with Q-Cter in protein Pup) cross-link involves residue Lys280.

This sequence belongs to the short-chain dehydrogenases/reductases (SDR) family. In terms of processing, pupylated at Lys-280 by the prokaryotic ubiquitin-like protein Pup, which probably leads to its degradation by the proteasome.

The sequence is that of Putative short-chain type dehydrogenase/reductase Rv0148 from Mycobacterium tuberculosis (strain ATCC 25618 / H37Rv).